A 229-amino-acid polypeptide reads, in one-letter code: N-(5'-phosphoribosyl)anthranilate isomerase (229 aa).

Belongs to the TrpF family.

It carries out the reaction N-(5-phospho-beta-D-ribosyl)anthranilate = 1-(2-carboxyphenylamino)-1-deoxy-D-ribulose 5-phosphate. Its pathway is amino-acid biosynthesis; L-tryptophan biosynthesis; L-tryptophan from chorismate: step 3/5. The protein is N-(5'-phosphoribosyl)anthranilate isomerase of Clostridium beijerinckii (strain ATCC 51743 / NCIMB 8052) (Clostridium acetobutylicum).